The sequence spans 181 residues: Oligoribonuclease (181 aa).

The region spanning 8-171 (LIWIDLEMTG…DDIRESIAEL (164 aa)) is the Exonuclease domain. Y129 is a catalytic residue.

Belongs to the oligoribonuclease family.

It is found in the cytoplasm. 3'-to-5' exoribonuclease specific for small oligoribonucleotides. The polypeptide is Oligoribonuclease (Alcanivorax borkumensis (strain ATCC 700651 / DSM 11573 / NCIMB 13689 / SK2)).